The following is a 474-amino-acid chain: Bifunctional protein GlmU (474 aa).

The segment at 1-232 (MSALDVIIMA…ALQVAGVNSP (232 aa)) is pyrophosphorylase. UDP-N-acetyl-alpha-D-glucosamine is bound by residues K23, Q78, 83 to 84 (GT), 105 to 107 (SGD), G142, E157, and N230. Residue D107 coordinates Mg(2+). N230 contributes to the Mg(2+) binding site. Residues 233–253 (LQLAELERAHQLAQARALMEQ) are linker. Residues 254 to 474 (GVRLADPARF…WQRPAKLPKA (221 aa)) form an N-acetyltransferase region. R349 and K367 together coordinate UDP-N-acetyl-alpha-D-glucosamine. The active-site Proton acceptor is H379. 2 residues coordinate UDP-N-acetyl-alpha-D-glucosamine: Y382 and N393. Acetyl-CoA is bound by residues A396, 402-403 (NY), S421, G439, and R456. Positions 454–474 (VARGKQVTKENWQRPAKLPKA) are disordered.

The protein in the N-terminal section; belongs to the N-acetylglucosamine-1-phosphate uridyltransferase family. This sequence in the C-terminal section; belongs to the transferase hexapeptide repeat family. In terms of assembly, homotrimer. Mg(2+) is required as a cofactor.

The protein resides in the cytoplasm. It carries out the reaction alpha-D-glucosamine 1-phosphate + acetyl-CoA = N-acetyl-alpha-D-glucosamine 1-phosphate + CoA + H(+). The enzyme catalyses N-acetyl-alpha-D-glucosamine 1-phosphate + UTP + H(+) = UDP-N-acetyl-alpha-D-glucosamine + diphosphate. Its pathway is nucleotide-sugar biosynthesis; UDP-N-acetyl-alpha-D-glucosamine biosynthesis; N-acetyl-alpha-D-glucosamine 1-phosphate from alpha-D-glucosamine 6-phosphate (route II): step 2/2. The protein operates within nucleotide-sugar biosynthesis; UDP-N-acetyl-alpha-D-glucosamine biosynthesis; UDP-N-acetyl-alpha-D-glucosamine from N-acetyl-alpha-D-glucosamine 1-phosphate: step 1/1. It functions in the pathway bacterial outer membrane biogenesis; LPS lipid A biosynthesis. Its function is as follows. Catalyzes the last two sequential reactions in the de novo biosynthetic pathway for UDP-N-acetylglucosamine (UDP-GlcNAc). The C-terminal domain catalyzes the transfer of acetyl group from acetyl coenzyme A to glucosamine-1-phosphate (GlcN-1-P) to produce N-acetylglucosamine-1-phosphate (GlcNAc-1-P), which is converted into UDP-GlcNAc by the transfer of uridine 5-monophosphate (from uridine 5-triphosphate), a reaction catalyzed by the N-terminal domain. In Paracidovorax citrulli (strain AAC00-1) (Acidovorax citrulli), this protein is Bifunctional protein GlmU.